Consider the following 249-residue polypeptide: Tetrahydromethanopterin S-methyltransferase subunit D (249 aa).

The next 6 membrane-spanning stretches (helical) occupy residues Ile9–Val29, Gly47–Met67, Leu75–Gly95, Val138–Tyr158, Leu183–Ser203, and Ala224–Ser244.

This sequence belongs to the MtrD family. In terms of assembly, the complex is composed of 8 subunits; MtrA, MtrB, MtrC, MtrD, MtrE, MtrF, MtrG and MtrH.

It is found in the cell membrane. It carries out the reaction 5-methyl-5,6,7,8-tetrahydromethanopterin + coenzyme M + 2 Na(+)(in) = 5,6,7,8-tetrahydromethanopterin + methyl-coenzyme M + 2 Na(+)(out). Its pathway is one-carbon metabolism; methanogenesis from CO(2); methyl-coenzyme M from 5,10-methylene-5,6,7,8-tetrahydromethanopterin: step 2/2. Its function is as follows. Part of a complex that catalyzes the formation of methyl-coenzyme M and tetrahydromethanopterin from coenzyme M and methyl-tetrahydromethanopterin. This is an energy-conserving, sodium-ion translocating step. This is Tetrahydromethanopterin S-methyltransferase subunit D from Methanosarcina acetivorans (strain ATCC 35395 / DSM 2834 / JCM 12185 / C2A).